The following is a 99-amino-acid chain: UPF0320 protein YER188C-A (99 aa).

The protein belongs to the UPF0320 family.

This chain is UPF0320 protein YER188C-A, found in Saccharomyces cerevisiae (strain ATCC 204508 / S288c) (Baker's yeast).